Here is a 500-residue protein sequence, read N- to C-terminus: Na(+)/H(+) antiporter NhaB (500 aa).

12 helical membrane passes run 28–50 (FLLSNPLLLWLAGPTVAAWVLVG), 68–88 (GGLLVLEALLLGLASPEALYA), 98–118 (LLLMFMVAGIYFMKDLLLLLF), 121–141 (LLLGVRSKTLLSLLFCLLAAL), 145–165 (FLDALTVTAVVISVAVAFFAV), 205–225 (LLMHAAVGTALGGVCTLVGEP), 244–264 (QVAPVSMPVLAAGLLTCVALE), 301–318 (ALLVQALAALVLMIGLAL), 350–370 (FQEALPFTALLVAFFAVVAVI), 394–414 (MLFIANGLLSAISDNVFVATI), 449–469 (VATPNGQAAFLFLLTSSIAPL), and 477–497 (MVWMALPYTLVMGGLGWWAVS).

Belongs to the NhaB Na(+)/H(+) (TC 2.A.34) antiporter family.

It localises to the cell inner membrane. It catalyses the reaction 2 Na(+)(in) + 3 H(+)(out) = 2 Na(+)(out) + 3 H(+)(in). Functionally, na(+)/H(+) antiporter that extrudes sodium in exchange for external protons. The polypeptide is Na(+)/H(+) antiporter NhaB (Pseudomonas paraeruginosa (strain DSM 24068 / PA7) (Pseudomonas aeruginosa (strain PA7))).